The chain runs to 312 residues: Olfactory receptor 2J1 (312 aa).

Residues 1-26 (MLMKKNASFEDFFLLLGFSNWPHLEV) are Extracellular-facing. A glycan (N-linked (GlcNAc...) asparagine) is linked at asparagine 6. A helical membrane pass occupies residues 27–50 (VLFVVILIFYLITLIGNLFIIILS). Topologically, residues 51 to 58 (YLDSHLHT) are cytoplasmic. A helical membrane pass occupies residues 59 to 80 (PMYFFLSNLSFLDLCYTTSSIP). The Extracellular segment spans residues 81-101 (QLLVNLWGPEKTISYAGCTVQ). Cysteines 98 and 190 form a disulfide. Residues 102-121 (LYFVLALGTAECVLLVVMSY) traverse the membrane as a helical segment. The Cytoplasmic portion of the chain corresponds to 122–140 (DRYAAVCRPLHYTVLMHPR). A helical membrane pass occupies residues 141 to 159 (FCRLLAAASWVSGFTTSAL). Over 160–196 (HSSFTFWIPLCRHRLVDHFFCEVPALLRLSCVDTQAN) the chain is Extracellular. Residues 197-220 (ELTLMVMSSIFVLIPLILILTSYG) traverse the membrane as a helical segment. The Cytoplasmic portion of the chain corresponds to 221 to 237 (AIARAVLSMQSTTGLQK). A helical membrane pass occupies residues 238 to 260 (VLRTCGAHLMVVSLFFIPVMCMY). Topologically, residues 261 to 273 (LQPPSENSQDQGK) are extracellular. A helical membrane pass occupies residues 274–293 (FIALFYTVVTPSLNPLIYTF). Residues 294–312 (RNKDVRGAVKRLMGWEWGM) lie on the Cytoplasmic side of the membrane.

It belongs to the G-protein coupled receptor 1 family.

The protein resides in the cell membrane. Its function is as follows. Odorant receptor. In Homo sapiens (Human), this protein is Olfactory receptor 2J1 (OR2J1).